The sequence spans 415 residues: Multidrug resistance protein MdtA (415 aa).

A signal peptide spans Met-1–Ala-21. Disordered stretches follow at residues Ser-32 to Ala-60 and Glu-392 to Ser-415. Positions Pro-399–Ser-415 are enriched in basic and acidic residues.

This sequence belongs to the membrane fusion protein (MFP) (TC 8.A.1) family. In terms of assembly, part of a tripartite efflux system composed of MdtA, MdtB and MdtC.

It localises to the cell inner membrane. In terms of biological role, the MdtABC tripartite complex confers resistance against novobiocin and deoxycholate. This Escherichia coli O81 (strain ED1a) protein is Multidrug resistance protein MdtA.